A 76-amino-acid chain; its full sequence is UPF0352 protein ECA2748 (76 aa).

Belongs to the UPF0352 family.

In Pectobacterium atrosepticum (strain SCRI 1043 / ATCC BAA-672) (Erwinia carotovora subsp. atroseptica), this protein is UPF0352 protein ECA2748.